The sequence spans 966 residues: Alpha-1,4 glucan phosphorylase L-1 isozyme, chloroplastic/amyloplastic (966 aa).

Residues 1–50 constitute a chloroplast transit peptide; that stretch reads MATANGAHLFNHYSSNSRFIHFTSRNTSSKLFLTKTSHFRRPKRCFHVNN. Lys-812 bears the N6-(pyridoxal phosphate)lysine mark.

Belongs to the glycogen phosphorylase family. Pyridoxal 5'-phosphate is required as a cofactor. In terms of tissue distribution, tuber.

It is found in the plastid. The protein resides in the chloroplast. It localises to the amyloplast. The enzyme catalyses [(1-&gt;4)-alpha-D-glucosyl](n) + phosphate = [(1-&gt;4)-alpha-D-glucosyl](n-1) + alpha-D-glucose 1-phosphate. Functionally, phosphorylase is an important allosteric enzyme in carbohydrate metabolism. Enzymes from different sources differ in their regulatory mechanisms and in their natural substrates. However, all known phosphorylases share catalytic and structural properties. In Solanum tuberosum (Potato), this protein is Alpha-1,4 glucan phosphorylase L-1 isozyme, chloroplastic/amyloplastic.